Consider the following 362-residue polypeptide: Endolytic peptidoglycan transglycosylase RlpA (362 aa).

Positions 1–17 are cleaved as a signal peptide; it reads MRKQWLGICIAAGMLAA. The N-palmitoyl cysteine moiety is linked to residue Cys-18. Cys-18 is lipidated: S-diacylglycerol cysteine. The interval 198–276 is disordered; that stretch reads PDLSGGAGTS…PSTTPATSPA (79 aa). A compositionally biased stretch (low complexity) spans 262–276; the sequence is PVVTAPSTTPATSPA. The 77-residue stretch at 285 to 361 folds into the SPOR domain; it reads QSASGNFMVQ…AQLQSFITTA (77 aa).

The protein belongs to the RlpA family.

The protein resides in the cell membrane. Its function is as follows. Lytic transglycosylase with a strong preference for naked glycan strands that lack stem peptides. This chain is Endolytic peptidoglycan transglycosylase RlpA, found in Escherichia coli (strain K12).